The primary structure comprises 239 residues: RBPJ-interacting and tubulin-associated protein 1 (239 aa).

The short motif at leucine 12 to proline 24 is the Nuclear export signal element. Disordered regions lie at residues alanine 62–lysine 97 and leucine 149–lysine 239. A Nuclear localization signal motif is present at residues glycine 93–serine 109. The interaction with RBPJ/RBPSUH stretch occupies residues tryptophan 129–alanine 158. 2 stretches are compositionally biased toward polar residues: residues leucine 149–lysine 159 and arginine 203–glycine 221. An interaction with tubulin region spans residues alanine 158–lysine 239.

It belongs to the RITA family. In terms of assembly, interacts with rbpj/rbpsuh.

Its subcellular location is the cytoplasm. It localises to the nucleus. In terms of biological role, tubulin-binding protein that acts as a negative regulator of Notch signaling pathway. Shuttles between the cytoplasm and the nucleus and mediates the nuclear export of rbpj/rbpsuh, thereby preventing the interaction between rbpj/rbpsuh and NICD product of Notch proteins (Notch intracellular domain), leading to down-regulate Notch-mediated transcription. May play a role in neurogenesis. This Xenopus laevis (African clawed frog) protein is RBPJ-interacting and tubulin-associated protein 1 (rita1).